We begin with the raw amino-acid sequence, 228 residues long: Cytochrome b6-f complex iron-sulfur subunit 2, chloroplastic (228 aa).

A chloroplast-targeting transit peptide spans 1–49; sequence MASSTLSPVTQLCSSKSGLSSVSQCLLLKPMKINSHGLGKDKRMKVKCM. A helical transmembrane segment spans residues 71 to 91; that stretch reads LLLGALSLPTAGMLVPYATFF. A Rieske domain is found at 115–211; that stretch reads ASEWLKTHPP…ADIDDGKVVF (97 aa). [2Fe-2S] cluster-binding residues include Cys157, His159, Cys175, and His178. Cys162 and Cys177 are joined by a disulfide.

This sequence belongs to the Rieske iron-sulfur protein family. As to quaternary structure, the 4 large subunits of the cytochrome b6-f complex are cytochrome b6, subunit IV (17 kDa polypeptide, petD), cytochrome f and the Rieske protein, while the 4 small subunits are petG, petL, petM and petN. The complex functions as a dimer. The cofactor is [2Fe-2S] cluster.

It localises to the plastid. The protein localises to the chloroplast thylakoid membrane. It carries out the reaction 2 oxidized [plastocyanin] + a plastoquinol + 2 H(+)(in) = 2 reduced [plastocyanin] + a plastoquinone + 4 H(+)(out). Functionally, component of the cytochrome b6-f complex, which mediates electron transfer between photosystem II (PSII) and photosystem I (PSI), cyclic electron flow around PSI, and state transitions. This is Cytochrome b6-f complex iron-sulfur subunit 2, chloroplastic (petC2) from Nicotiana tabacum (Common tobacco).